The chain runs to 509 residues: ESX-2 secretion system protein eccD2 (509 aa).

The next 11 helical transmembrane spans lie at 135-155 (LTAA…VLAL), 170-190 (AMAG…WWGW), 196-216 (LFSG…ACAP), 222-242 (AAHA…IGVA), 248-268 (QTAV…VAAV), 281-301 (ICVL…ALWV), 364-384 (VQVG…WGVL), 389-409 (PWAW…ITQG), 418-438 (AVAL…KYAL), 449-469 (LWPA…ALVV), and 487-507 (VLAM…FAWL).

This sequence belongs to the EccD/Snm4 family. Part of the ESX-2 / type VII secretion system (T7SS), which is composed of cytosolic and membrane components.

It localises to the cell membrane. The protein is ESX-2 secretion system protein eccD2 (eccD2) of Mycobacterium tuberculosis (strain CDC 1551 / Oshkosh).